The chain runs to 194 residues: Methyl-CpG-binding domain protein 3-like 1 (194 aa).

Residues 1-104 (MAKSSQRKQR…KLVPSYTGGS (104 aa)) form a transcription repressor region.

This sequence belongs to the MBD3L family. In terms of tissue distribution, highly expressed in testis. Detected at low levels in pancreas. Not detected in the other tissues tested.

The protein localises to the nucleus. Its function is as follows. Transcriptional repressor. This Homo sapiens (Human) protein is Methyl-CpG-binding domain protein 3-like 1 (MBD3L1).